Consider the following 250-residue polypeptide: 7-cyano-7-deazaguanine synthase (250 aa).

Phe21–Leu31 contributes to the ATP binding site. 4 residues coordinate Zn(2+): Cys209, Cys224, Cys227, and Cys230.

The protein belongs to the QueC family. Requires Zn(2+) as cofactor.

It catalyses the reaction 7-carboxy-7-deazaguanine + NH4(+) + ATP = 7-cyano-7-deazaguanine + ADP + phosphate + H2O + H(+). It functions in the pathway purine metabolism; 7-cyano-7-deazaguanine biosynthesis. In terms of biological role, catalyzes the ATP-dependent conversion of 7-carboxy-7-deazaguanine (CDG) to 7-cyano-7-deazaguanine (preQ(0)). This Caulobacter sp. (strain K31) protein is 7-cyano-7-deazaguanine synthase.